Reading from the N-terminus, the 283-residue chain is Lipoyl synthase (283 aa).

Positions 35, 40, 46, 61, 65, 68, and 273 each coordinate [4Fe-4S] cluster. The region spanning F47–K262 is the Radical SAM core domain.

Belongs to the radical SAM superfamily. Lipoyl synthase family. [4Fe-4S] cluster serves as cofactor.

The protein resides in the cytoplasm. It carries out the reaction [[Fe-S] cluster scaffold protein carrying a second [4Fe-4S](2+) cluster] + N(6)-octanoyl-L-lysyl-[protein] + 2 oxidized [2Fe-2S]-[ferredoxin] + 2 S-adenosyl-L-methionine + 4 H(+) = [[Fe-S] cluster scaffold protein] + N(6)-[(R)-dihydrolipoyl]-L-lysyl-[protein] + 4 Fe(3+) + 2 hydrogen sulfide + 2 5'-deoxyadenosine + 2 L-methionine + 2 reduced [2Fe-2S]-[ferredoxin]. It participates in protein modification; protein lipoylation via endogenous pathway; protein N(6)-(lipoyl)lysine from octanoyl-[acyl-carrier-protein]: step 2/2. Catalyzes the radical-mediated insertion of two sulfur atoms into the C-6 and C-8 positions of the octanoyl moiety bound to the lipoyl domains of lipoate-dependent enzymes, thereby converting the octanoylated domains into lipoylated derivatives. The protein is Lipoyl synthase of Geotalea uraniireducens (strain Rf4) (Geobacter uraniireducens).